Consider the following 271-residue polypeptide: Mitochondrial distribution and morphology protein 12 (271 aa).

The region spanning 1-267 (MSFDINWSTL…WPSWINLDFN (267 aa)) is the SMP-LTD domain. Lys-49 is covalently cross-linked (Glycyl lysine isopeptide (Lys-Gly) (interchain with G-Cter in ubiquitin)).

Belongs to the MDM12 family. Component of the ER-mitochondria encounter structure (ERMES) or MDM complex, composed of MMM1, MDM10, MDM12 and MDM34. An MMM1 homodimer associates with one molecule of MDM12 on each side in a pairwise head-to-tail manner, and the SMP-LTD domains of MMM1 and MDM12 generate a continuous hydrophobic tunnel for phospholipid trafficking. Interacts with PUF3.

The protein localises to the mitochondrion outer membrane. Its subcellular location is the endoplasmic reticulum membrane. Functionally, component of the ERMES/MDM complex, which serves as a molecular tether to connect the endoplasmic reticulum (ER) and mitochondria. Components of this complex are involved in the control of mitochondrial shape and protein biogenesis, and function in nonvesicular lipid trafficking between the ER and mitochondria. MDM12 is required for the interaction of the ER-resident membrane protein MMM1 and the outer mitochondrial membrane-resident beta-barrel protein MDM10. The MDM12-MMM1 subcomplex functions in the major beta-barrel assembly pathway that is responsible for biogenesis of all mitochondrial outer membrane beta-barrel proteins, and acts in a late step after the SAM complex. The MDM10-MDM12-MMM1 subcomplex further acts in the TOM40-specific pathway after the action of the MDM12-MMM1 complex. Essential for establishing and maintaining the structure of mitochondria and maintenance of mtDNA nucleoids. This chain is Mitochondrial distribution and morphology protein 12, found in Saccharomyces cerevisiae (strain AWRI1631) (Baker's yeast).